The sequence spans 281 residues: Acetyl-coenzyme A carboxylase carboxyl transferase subunit beta (281 aa).

Positions 1 to 23 (MAWFKREKKGISTSTEEKKEAPD) are disordered. Residues 25–281 (LWNKCPNCKK…LAAFLKMMKN (257 aa)) form the CoA carboxyltransferase N-terminal domain. Zn(2+) contacts are provided by cysteine 29, cysteine 32, cysteine 48, and cysteine 51. Residues 29 to 51 (CPNCKKALHSADLLENKYVCQYC) form a C4-type zinc finger.

Belongs to the AccD/PCCB family. As to quaternary structure, acetyl-CoA carboxylase is a heterohexamer composed of biotin carboxyl carrier protein (AccB), biotin carboxylase (AccC) and two subunits each of ACCase subunit alpha (AccA) and ACCase subunit beta (AccD). Requires Zn(2+) as cofactor.

Its subcellular location is the cytoplasm. It catalyses the reaction N(6)-carboxybiotinyl-L-lysyl-[protein] + acetyl-CoA = N(6)-biotinyl-L-lysyl-[protein] + malonyl-CoA. Its pathway is lipid metabolism; malonyl-CoA biosynthesis; malonyl-CoA from acetyl-CoA: step 1/1. Component of the acetyl coenzyme A carboxylase (ACC) complex. Biotin carboxylase (BC) catalyzes the carboxylation of biotin on its carrier protein (BCCP) and then the CO(2) group is transferred by the transcarboxylase to acetyl-CoA to form malonyl-CoA. In Pedobacter heparinus (strain ATCC 13125 / DSM 2366 / CIP 104194 / JCM 7457 / NBRC 12017 / NCIMB 9290 / NRRL B-14731 / HIM 762-3), this protein is Acetyl-coenzyme A carboxylase carboxyl transferase subunit beta.